The chain runs to 220 residues: Aspartic protease inhibitor 4 (220 aa).

Positions 1-23 are cleaved as a signal peptide; it reads MMKCLFLLCLCLLPILVFSSTFT. Positions 24–32 are excised as a propeptide; sequence SQNPINLPS. The short motif at 26–31 is the Vacuolar targeting signal element; sequence NPINLP. Asn51 is a glycosylation site (N-linked (GlcNAc...) asparagine). Cystine bridges form between Cys80-Cys125 and Cys174-Cys185.

It belongs to the protease inhibitor I3 (leguminous Kunitz-type inhibitor) family. Tubers.

The protein localises to the vacuole. Inhibits tightly cathepsin D (aspartic protease) and weakly trypsin (serine protease). May protect the plant by inhibiting proteases of invading organisms. In Solanum tuberosum (Potato), this protein is Aspartic protease inhibitor 4.